We begin with the raw amino-acid sequence, 651 residues long: Coiled-coil domain-containing protein 81 (651 aa).

The segment at 194-314 (LSSRESFGKR…PKTSPAPACQ (121 aa)) is disordered. Ser206 is modified (phosphoserine). 2 stretches are compositionally biased toward basic and acidic residues: residues 212–222 (RIEHKETENKP) and 232–250 (GENRPRKSKLKDQSDKEEG). The segment covering 265–275 (SISPAKVTSGS) has biased composition (polar residues). Phosphoserine is present on residues Ser273, Ser275, Ser294, and Ser416. Coiled coils occupy residues 428 to 465 (SQSLLKQMESKREKEIKQRQNRELMDRLEQVQLTEELA) and 539 to 566 (KRNTILNQLVDQRRDLQMLQRTKREHLA).

It localises to the cytoplasm. Its subcellular location is the cytoskeleton. It is found in the microtubule organizing center. The protein localises to the centrosome. The protein is Coiled-coil domain-containing protein 81 (Ccdc81) of Rattus norvegicus (Rat).